A 628-amino-acid chain; its full sequence is Chaperone protein HtpG (628 aa).

Residues 1–333 form an a; substrate-binding region; that stretch reads MTTDTKATET…SADLPLNVSR (333 aa). The tract at residues 334–549 is b; sequence EMIQESPLLA…EHGPDRQFER (216 aa). The c stretch occupies residues 550–628; it reads LMNAAGRLDK…RLIARGIAKG (79 aa).

The protein belongs to the heat shock protein 90 family. In terms of assembly, homodimer.

The protein resides in the cytoplasm. In terms of biological role, molecular chaperone. Has ATPase activity. The protein is Chaperone protein HtpG of Mesorhizobium japonicum (strain LMG 29417 / CECT 9101 / MAFF 303099) (Mesorhizobium loti (strain MAFF 303099)).